The sequence spans 417 residues: Serpin A3-7 (417 aa).

Residues 1–25 form the signal peptide; it reads MRTERTSFLLALGLLVSGFCSRVHC. 4 N-linked (GlcNAc...) asparagine glycosylation sites follow: N103, N183, N221, and N267.

It belongs to the serpin family. As to quaternary structure, homodimer.

The protein resides in the cytoplasmic vesicle. Its subcellular location is the secretory vesicle. It is found in the chromaffin granule. It localises to the secreted. Its function is as follows. Serine protease inhibitor. The sequence is that of Serpin A3-7 from Bos taurus (Bovine).